A 202-amino-acid polypeptide reads, in one-letter code: Peptide deformylase (202 aa).

The segment at 1 to 24 is disordered; that stretch reads MAGSFAQLAKNAEKKKPSISVSKE. 2 residues coordinate Fe cation: C121 and H163. E164 is a catalytic residue. Residue H167 coordinates Fe cation.

It belongs to the polypeptide deformylase family. The cofactor is Fe(2+).

The catalysed reaction is N-terminal N-formyl-L-methionyl-[peptide] + H2O = N-terminal L-methionyl-[peptide] + formate. In terms of biological role, removes the formyl group from the N-terminal Met of newly synthesized proteins. Requires at least a dipeptide for an efficient rate of reaction. N-terminal L-methionine is a prerequisite for activity but the enzyme has broad specificity at other positions. In Prochlorococcus marinus (strain NATL2A), this protein is Peptide deformylase.